The following is a 492-amino-acid chain: Catalase-2 (492 aa).

Residues H65 and N138 contribute to the active site. Y348 provides a ligand contact to heme.

Belongs to the catalase family. In terms of assembly, homotetramer and heterotetramer. At least six or seven isozymes are produced from a mixture of 3 gene products. Interacts with NCA1. Interacts with LSD1. Heme is required as a cofactor.

The protein localises to the cytoplasm. The protein resides in the cytosol. Its subcellular location is the peroxisome matrix. It catalyses the reaction 2 H2O2 = O2 + 2 H2O. In terms of biological role, catalyzes the degradation of hydrogen peroxide (H(2)O(2)) generated by peroxisomal oxidases to water and oxygen, thereby protecting cells from the toxic effects of hydrogen peroxide. This is Catalase-2 (CAT2) from Arabidopsis thaliana (Mouse-ear cress).